Here is a 1706-residue protein sequence, read N- to C-terminus: Serine/threonine-protein kinase vps15 (1706 aa).

Residues 24 to 293 enclose the Protein kinase domain; that stretch reads YHNERSLGDS…YLQKYRGTVF (270 aa). ATP contacts are provided by residues 30–38 and Lys52; that span reads LGDSHFLRT. One copy of the HEAT 1 repeat lies at 56 to 94; it reads NKLPEISLSSIVNLLKEEQENISYRVPNAVPYIKTLVTL. Asp146 (proton acceptor) is an active-site residue. 7 HEAT repeats span residues 426–465, 466–504, 511–549, 587–625, 626–664, 665–703, and 705–743; these read LYGA…NICD, ESKL…NVTS, FLFQ…QASK, HDLV…FFGK, AKSN…FIGP, RSVD…LHLF, and KLVV…SFDD. Ser957 bears the Phosphoserine mark. At Tyr958 the chain carries Phosphotyrosine. Positions 982-1099 are disordered; the sequence is TTKPKDVSQS…GKSLAPLISS (118 aa). Composition is skewed to basic and acidic residues over residues 984-1002 and 1014-1023; these read KPKD…RESN and DVYRQTDNPE. Polar residues predominate over residues 1029–1055; that stretch reads DTASSKVDTHNPTVTQPTDDTGGLNSY. Over residues 1056–1069 the composition is skewed to low complexity; it reads NTENPLLTNNTLEP. Positions 1079-1090 are enriched in basic and acidic residues; sequence KDSDKHAKESKG. WD repeat units lie at residues 1213–1252 and 1368–1407; these read LLDG…RHIS and LQCG…LSCS. Residues 1431-1442 show a composition bias toward polar residues; it reads NEYTSGNNNSPV. A disordered region spans residues 1431–1461; sequence NEYTSGNNNSPVTKVPGSSSTSSSSTQPINS. The stretch at 1577–1622 is one WD 3 repeat; sequence CISSPIYRYRGPSAGSVEREPLFLIAASGSPHAFIWNPHNVSASSS.

It belongs to the protein kinase superfamily. Ser/Thr protein kinase family. In terms of assembly, component of the autophagy-specific vps34 PI3-kinase complex I composed of vps15, atg6, pik3/vps34, atg14 and atg38. Also a component of the vps34 PI3-kinase complex II composed of atg6, pik3, vps15 and vps38.

The enzyme catalyses L-seryl-[protein] + ATP = O-phospho-L-seryl-[protein] + ADP + H(+). It carries out the reaction L-threonyl-[protein] + ATP = O-phospho-L-threonyl-[protein] + ADP + H(+). Functions as a part of the autophagy-specific VPS34 PI3-kinase complex I that plays a role in autophagosome assembly. This complex is essential to recruit the atg8-phosphatidylinositol conjugate and the atg12-atg5 conjugate to the pre-autophagosomal structure. Also functions as part of the VPS34 PI3-kinase complex II. The polypeptide is Serine/threonine-protein kinase vps15 (Schizosaccharomyces pombe (strain 972 / ATCC 24843) (Fission yeast)).